A 68-amino-acid polypeptide reads, in one-letter code: Sec-independent protein translocase protein TatA (68 aa).

Residues 1-21 (MGSFSIWHWLIVLAVVLLLFG) form a helical membrane-spanning segment. Residues 48-68 (AAAADKSIDGKTVDHKSDEVR) form a disordered region. The segment covering 53 to 68 (KSIDGKTVDHKSDEVR) has biased composition (basic and acidic residues).

Belongs to the TatA/E family. The Tat system comprises two distinct complexes: a TatABC complex, containing multiple copies of TatA, TatB and TatC subunits, and a separate TatA complex, containing only TatA subunits. Substrates initially bind to the TatABC complex, which probably triggers association of the separate TatA complex to form the active translocon.

Its subcellular location is the cell inner membrane. In terms of biological role, part of the twin-arginine translocation (Tat) system that transports large folded proteins containing a characteristic twin-arginine motif in their signal peptide across membranes. TatA could form the protein-conducting channel of the Tat system. The sequence is that of Sec-independent protein translocase protein TatA from Sinorhizobium medicae (strain WSM419) (Ensifer medicae).